Reading from the N-terminus, the 466-residue chain is 3-isopropylmalate dehydratase large subunit (466 aa).

Cys-347, Cys-407, and Cys-410 together coordinate [4Fe-4S] cluster.

The protein belongs to the aconitase/IPM isomerase family. LeuC type 1 subfamily. In terms of assembly, heterodimer of LeuC and LeuD. [4Fe-4S] cluster is required as a cofactor.

It carries out the reaction (2R,3S)-3-isopropylmalate = (2S)-2-isopropylmalate. The protein operates within amino-acid biosynthesis; L-leucine biosynthesis; L-leucine from 3-methyl-2-oxobutanoate: step 2/4. Catalyzes the isomerization between 2-isopropylmalate and 3-isopropylmalate, via the formation of 2-isopropylmaleate. The protein is 3-isopropylmalate dehydratase large subunit of Enterobacter sp. (strain 638).